Here is a 325-residue protein sequence, read N- to C-terminus: Hydroxylase/desaturase poxK (325 aa).

Residues 1–12 (MTATATPVPTVA) show a composition bias toward low complexity. Residues 1 to 25 (MTATATPVPTVASHAQDITLPPPPK) form a disordered region.

The protein belongs to the asaB hydroxylase/desaturase family.

Its pathway is secondary metabolite biosynthesis. Functionally, hydroxylase/desaturase; part of the gene cluster that mediates the biosynthesis of oxaleimides, cytotoxic compounds containing an unusual disubstituted succinimide moiety. The first step of the pathway is provided by the HR-PKS poxF that serves in a new mode of collaborative biosynthesis with the PKS-NRPS poxE, by providing the olefin containing amino acid substrate via the synthesis of an ACP-bound dec-4-enoate. The cytochrome P450 monooxygenase poxM-catalyzed oxidation at the alpha-position creates the enzyme-bound 2-hydroxydec-4-enoyl-ACP thioester, which may be prone to spontaneous hydrolysis to yield 2-hydroxydec-4-enoic acid due to increased electrophilicity of the carbonyl. 2-hydroxydec-4-enoic acid can then be further oxidized by poxM to yield the alpha-ketoacid 2-oxodec-4-enoicacid, which is reductively aminated by the aminotransferase poxL to yield (S,E)-2-aminodec-4-enoic acid. The Hybrid PKS-NRPS synthetase poxE then performs condensation between the octaketide product of its PKS modules and the amino group of (S,E)-2-aminodec-4-enoic acid which is activated and incorporated by the adenylation domain. The resulting aminoacyl product can be cyclized by the Diels-Alderase PoxQ and reductively released by the reductive (R) domain of poxE to yield an aldehyde intermediate. The released aldehyde is then substrate for a Knoevenagel condensation by the hydrolyase poxO followed by an oxidation at the 5-position of the pyrrolidone ring. The presence of the olefin from the amino acid building block allows for migration of the substituted allyl group to occur. This allylic transposition reaction takes place in a conjugate addition, semipinacol-like fashion to yield a succinimide intermediate. Iterative two-electron oxidations of the C7 methyl of the succinimide intermediate to the carboxylic acid can be catalyzed by one of two remaining cytochrome P450 monooxygenasess poxC or poxD to yield oxaleimide A. Subsequent oxidation yields the maleimide scaffold oxaleimide I. Both oxaleimide A and oxaleimide I can undergo oxidative modifications in the decalin ring to yield the series of products oxaleimides B to H. This chain is Hydroxylase/desaturase poxK, found in Penicillium oxalicum.